Reading from the N-terminus, the 396-residue chain is Elongation factor Tu (396 aa).

The region spanning 11-205 is the tr-type G domain; the sequence is KPHVNIGTIG…VIDEYIPTPV (195 aa). Positions 20 to 27 are G1; it reads GHVDHGKT. Position 20–27 (20–27) interacts with GTP; that stretch reads GHVDHGKT. Thr-27 contributes to the Mg(2+) binding site. The tract at residues 61 to 65 is G2; that stretch reads GITIN. A G3 region spans residues 82 to 85; the sequence is DAPG. GTP-binding positions include 82–86 and 137–140; these read DAPGH and NKTD. The tract at residues 137–140 is G4; it reads NKTD. Residues 175-177 form a G5 region; that stretch reads SAL.

It belongs to the TRAFAC class translation factor GTPase superfamily. Classic translation factor GTPase family. EF-Tu/EF-1A subfamily. In terms of assembly, monomer.

The protein localises to the cytoplasm. It carries out the reaction GTP + H2O = GDP + phosphate + H(+). Functionally, GTP hydrolase that promotes the GTP-dependent binding of aminoacyl-tRNA to the A-site of ribosomes during protein biosynthesis. The protein is Elongation factor Tu of Oenococcus oeni (strain ATCC BAA-331 / PSU-1).